The following is a 284-amino-acid chain: Methylglyoxal reductase YeaE (284 aa).

It belongs to the aldo/keto reductase family.

The catalysed reaction is hydroxyacetone + NADP(+) = methylglyoxal + NADPH + H(+). It catalyses the reaction a primary alcohol + NADP(+) = an aldehyde + NADPH + H(+). Functionally, aldo-keto reductase that contributes to cellular methylglyoxal detoxification by catalyzing the NADPH-dependent conversion of methylglyoxal to acetol. It also exhibits activity with glyoxal and probably plays a significant role in detoxification of glyoxal in vivo. Can also use aromatic aldehydes such as 4-nitrobenzaldehyde, 3-nitrobenzaldehyde and benzaldehyde, and phenylglyoxal. This is Methylglyoxal reductase YeaE (yeaE) from Escherichia coli (strain K12).